Reading from the N-terminus, the 222-residue chain is Small ribosomal subunit protein uS5 (222 aa).

A disordered region spans residues 1-41 (MAEQAGAGSAQDNRGGGRDDRGGRGRRDDRGGRGGRDDREK). A compositionally biased stretch (basic and acidic residues) spans 15 to 41 (GGGRDDRGGRGRRDDRGGRGGRDDREK). The 64-residue stretch at 44–107 (YLERVVTINR…EEARKNFFRV (64 aa)) folds into the S5 DRBM domain.

The protein belongs to the universal ribosomal protein uS5 family. As to quaternary structure, part of the 30S ribosomal subunit. Contacts proteins S4 and S8.

In terms of biological role, with S4 and S12 plays an important role in translational accuracy. Functionally, located at the back of the 30S subunit body where it stabilizes the conformation of the head with respect to the body. The chain is Small ribosomal subunit protein uS5 from Mycolicibacterium gilvum (strain PYR-GCK) (Mycobacterium gilvum (strain PYR-GCK)).